The primary structure comprises 361 residues: MSKFSFNIHHQHKKARNGVITTAHGEIRTPAFMPVGTRGTVKAMLPESVAETGADILLGNTYHLMLQPTAERIARLGGLHKFMNWDKPILTDSGGFQVMSLSKLRKITEEGVSFSSHINGDKYMLTPERSTEIQHLLGSTITMAFDECTPYPATFEEAKTSMQLTTRWANRSRNAFVKRDGYAQFGIIQGSVYEELREQSARDLVELDFEGYAIGGLAVGEGQELMFKVLDYAPDFLPQNKPCYLMGVGKPADIIGAVRRGIDMFDCVIPTRSGRNGQAFTKYGTVNIRNSKYADDNEPLEHDCLCPACKNYSKAYLHLLVRIGEILGAMLMTWHNLTYFQNLMSRIRKYIKLGKDFDFDS.

The active-site Proton acceptor is the D92. Substrate contacts are provided by residues D92 to F96, D146, Q189, and G216. The segment at G247–D253 is RNA binding. D266 serves as the catalytic Nucleophile. Positions T271 to R275 are RNA binding; important for wobble base 34 recognition. 4 residues coordinate Zn(2+): C304, C306, C309, and H335.

It belongs to the queuine tRNA-ribosyltransferase family. In terms of assembly, homodimer. Within each dimer, one monomer is responsible for RNA recognition and catalysis, while the other monomer binds to the replacement base PreQ1. It depends on Zn(2+) as a cofactor.

It carries out the reaction 7-aminomethyl-7-carbaguanine + guanosine(34) in tRNA = 7-aminomethyl-7-carbaguanosine(34) in tRNA + guanine. The protein operates within tRNA modification; tRNA-queuosine biosynthesis. Catalyzes the base-exchange of a guanine (G) residue with the queuine precursor 7-aminomethyl-7-deazaguanine (PreQ1) at position 34 (anticodon wobble position) in tRNAs with GU(N) anticodons (tRNA-Asp, -Asn, -His and -Tyr). Catalysis occurs through a double-displacement mechanism. The nucleophile active site attacks the C1' of nucleotide 34 to detach the guanine base from the RNA, forming a covalent enzyme-RNA intermediate. The proton acceptor active site deprotonates the incoming PreQ1, allowing a nucleophilic attack on the C1' of the ribose to form the product. After dissociation, two additional enzymatic reactions on the tRNA convert PreQ1 to queuine (Q), resulting in the hypermodified nucleoside queuosine (7-(((4,5-cis-dihydroxy-2-cyclopenten-1-yl)amino)methyl)-7-deazaguanosine). The chain is Queuine tRNA-ribosyltransferase from Rickettsia felis (strain ATCC VR-1525 / URRWXCal2) (Rickettsia azadi).